Here is a 485-residue protein sequence, read N- to C-terminus: Glutamyl-tRNA(Gln) amidotransferase subunit A (485 aa).

Residues Lys79 and Ser154 each act as charge relay system in the active site. The active-site Acyl-ester intermediate is Ser178.

This sequence belongs to the amidase family. GatA subfamily. In terms of assembly, heterotrimer of A, B and C subunits.

It catalyses the reaction L-glutamyl-tRNA(Gln) + L-glutamine + ATP + H2O = L-glutaminyl-tRNA(Gln) + L-glutamate + ADP + phosphate + H(+). In terms of biological role, allows the formation of correctly charged Gln-tRNA(Gln) through the transamidation of misacylated Glu-tRNA(Gln) in organisms which lack glutaminyl-tRNA synthetase. The reaction takes place in the presence of glutamine and ATP through an activated gamma-phospho-Glu-tRNA(Gln). The polypeptide is Glutamyl-tRNA(Gln) amidotransferase subunit A (Persephonella marina (strain DSM 14350 / EX-H1)).